Consider the following 682-residue polypeptide: Methionine--tRNA ligase (682 aa).

The 'HIGH' region motif lies at 15–25 (PYANGAIHLGH). Zn(2+) contacts are provided by Cys-146, Cys-149, Cys-159, and Cys-162. The 'KMSKS' region signature appears at 331 to 335 (KMSKS). Lys-334 contacts ATP. The region spanning 580–682 (DFAKLDLRVA…QGVKPGMQVK (103 aa)) is the tRNA-binding domain.

Belongs to the class-I aminoacyl-tRNA synthetase family. MetG type 1 subfamily. As to quaternary structure, homodimer. Zn(2+) is required as a cofactor.

The protein localises to the cytoplasm. It carries out the reaction tRNA(Met) + L-methionine + ATP = L-methionyl-tRNA(Met) + AMP + diphosphate. Is required not only for elongation of protein synthesis but also for the initiation of all mRNA translation through initiator tRNA(fMet) aminoacylation. This chain is Methionine--tRNA ligase, found in Pasteurella multocida (strain Pm70).